A 351-amino-acid chain; its full sequence is MTSSENSSVSNPLRTDVLIVGAGPVGLFAAFEAGVIGLSCQIVDGIERPGGQCIELYPDKPIYDIPAVPSCTARDLVDRLVEQCRPFNPPMHLGQRIERLDPLEGGRWLARTDKGHTFDAAAILIAAGNGAFVPQRLALDEAARLEGRYVHYRVSDMNGLAGTNVVVAGGGDSALDWALALRSVARHVTLVHRRSGFSATDSSVARLRQAVAAGEMDFVVGTIARLNSPVGPLESIEVRQIGGSVCLDADQLLVLYGLVADLGPIVNWGIAIQAGRIVVDTSYYESSRPGIFAAGDIACYPNKQKLILCGFHEASLALRKAYNYAFPDKKRVHVHSSYDAKLAERVAAVHP.

Residues Asp-44, Gln-52, Tyr-57, Ile-97, Phe-132, Asp-296, and Ser-337 each coordinate FAD.

It belongs to the ferredoxin--NADP reductase type 2 family. Homodimer. FAD is required as a cofactor.

The catalysed reaction is 2 reduced [2Fe-2S]-[ferredoxin] + NADP(+) + H(+) = 2 oxidized [2Fe-2S]-[ferredoxin] + NADPH. The polypeptide is Ferredoxin--NADP reductase (Burkholderia vietnamiensis (strain G4 / LMG 22486) (Burkholderia cepacia (strain R1808))).